The following is a 503-amino-acid chain: Cytochrome P450 monooxygenase ecdH (503 aa).

The helical transmembrane segment at 8-24 (TTLLCGVISSTLLLLLL) threads the bilayer. N-linked (GlcNAc...) asparagine glycans are attached at residues asparagine 64, asparagine 324, and asparagine 413. Cysteine 449 provides a ligand contact to heme.

The protein belongs to the cytochrome P450 family. The cofactor is heme.

It localises to the membrane. It functions in the pathway antifungal biosynthesis. Its function is as follows. Cytochrome P450 monooxygenase; part of the gene cluster that mediates the biosynthesis of echinocandin B, a fungal lipidated cyclic hexapeptide that acts as an antifungal agent. Linoleoyl-AMP, produced by the fatty-acyl-AMP ligase ecdI, is transferred to the initiation carrier domain (T0) of ecdA. The linoleoyl-S-phosphopantetheinyl-T0 is sequentially extended with L-ornithine, L-threonine, L-proline, L-homotyrosine, L-threonine, and 4R-methyl-L-proline to form the linear hexapeptide. Thereafter, the terminal condensation (C7) performs macrocyclization of the NRPS product and the cyclic scaffold is released from ecdA. All six of the amino acid residues are hydroxylated, including 4R,5R-dihydroxy-L-ornithine, 4R-hydroxyl-L-proline, 3S,4S-dihydroxy-L-homotyrosine, and 3S-hydroxyl-4S-methyl-L-prolin. In the pathway, all the hydroxylation reactions are proposed to occur following completion of the cyclic peptide, so the unhydroxylated precursor produced by ecdA will undergo six rounds of hydroxylation. Five hydroxylase genes (ecdG, ecdH, ecdK, htyE and htyF) are embedded within the echinocandin B (ecd) and L-homotyrosine (hty) clusters. This chain is Cytochrome P450 monooxygenase ecdH, found in Aspergillus rugulosus (Emericella rugulosa).